Reading from the N-terminus, the 362-residue chain is Cyclic di-GMP phosphodiesterase PdeL (362 aa).

Residues 18–83 (HLSLPGSVSE…TFWRDIFFQY (66 aa)) enclose the HTH luxR-type domain. A DNA-binding region (H-T-H motif) is located at residues 42–61 (VTEISQYRNRSAKTISHQKK). The region spanning 106–360 (HIVTPEAISL…KFISEWVMKA (255 aa)) is the EAL domain. A substrate-binding site is contributed by Gln127. A Mg(2+)-binding site is contributed by Glu141. Substrate contacts are provided by residues 144 to 145 (VR) and Asn200. Residues Asn200, Glu232, and Asp262 each coordinate Mg(2+). Substrate-binding positions include Asp262, Lys286, 319–322 (EGVE), and Tyr341.

As to quaternary structure, is in a fast thermodynamic monomer-homodimer equilibrium. Dimerization is required for PDE activity. Dimerization affinity is increased about 100-fold upon substrate binding. Mg(2+) serves as cofactor. Requires Mn(2+) as cofactor.

The catalysed reaction is 3',3'-c-di-GMP + H2O = 5'-phosphoguanylyl(3'-&gt;5')guanosine + H(+). Strongly inhibited by Ca(2+). In terms of biological role, acts both as an enzyme and as a c-di-GMP sensor to couple transcriptional activity to the c-di-GMP status of the cell. Phosphodiesterase (PDE) that catalyzes the hydrolysis of cyclic-di-GMP (c-di-GMP) to 5'-pGpG. Also acts as a transcription factor to control its own expression. This Escherichia coli (strain K12) protein is Cyclic di-GMP phosphodiesterase PdeL.